The chain runs to 184 residues: GMP synthase [glutamine-hydrolyzing] subunit A (184 aa).

Positions 3-184 (PICVVNNYGQ…YENFDAICTE (182 aa)) constitute a Glutamine amidotransferase type-1 domain. C75 functions as the Nucleophile in the catalytic mechanism. Residues H162 and E164 contribute to the active site.

In terms of assembly, heterodimer composed of a glutamine amidotransferase subunit (A) and a GMP-binding subunit (B).

The enzyme catalyses XMP + L-glutamine + ATP + H2O = GMP + L-glutamate + AMP + diphosphate + 2 H(+). Its pathway is purine metabolism; GMP biosynthesis; GMP from XMP (L-Gln route): step 1/1. Catalyzes the synthesis of GMP from XMP. This is GMP synthase [glutamine-hydrolyzing] subunit A from Methanoregula boonei (strain DSM 21154 / JCM 14090 / 6A8).